We begin with the raw amino-acid sequence, 300 residues long: Sporulation protein SPS18 (300 aa).

Residues 11–130 (ENRKRLLRAK…LANEVRSNDI (120 aa)) enclose the Arf-GAP domain. The C4-type zinc-finger motif lies at 28-51 (CFECKSVNPQFVSCSFGIFICVNC).

This chain is Sporulation protein SPS18 (SPS18), found in Saccharomyces cerevisiae (strain ATCC 204508 / S288c) (Baker's yeast).